A 676-amino-acid polypeptide reads, in one-letter code: Envelope glycoprotein (676 aa).

Positions 1–32 are cleaved as a signal peptide; the sequence is MEGLSLLQLPRDKFRKSSFFVWVIILFQKAFS. Topologically, residues 33–650 are extracellular; sequence MPLGVVTNST…DDNWWTGWRQ (618 aa). N-linked (GlcNAc...) asparagine; by host glycosylation is present at Asn40. Disulfide bonds link Cys53–Cys609, Cys108–Cys135, Cys121–Cys147, Cys511–Cys556, and Cys601–Cys608. Residues 54 to 201 form a receptor-binding region; that stretch reads KDHLASTDQL…TFLQSPPIRE (148 aa). Residues Asn204, Asn208, Asn238, Asn257, Asn268, Asn296, and Asn314 are each glycosylated (N-linked (GlcNAc...) asparagine; by host). Positions 305–485 are mucin-like region; it reads ELSFETLSLN…STSNGLITST (181 aa). The interval 313–351 is disordered; it reads LNETEDDDATSSRTTKGRISDRATRKYSDLVPKDSPGMV. The span at 330 to 344 shows a compositional bias: basic and acidic residues; that stretch reads RISDRATRKYSDLVP. Residue Asn366 is glycosylated (N-linked (GlcNAc...) asparagine; by host). Residues 406 to 458 are disordered; the sequence is SSSQILSSSPTMAPSPETQTSTTYTPKLPVMTTEESTTPPRNSPGSTTEAPTL. Polar residues-rich tracts occupy residues 415-430 and 438-458; these read PTMA…TTYT and TEES…APTL. Residue Asn463 is glycosylated (N-linked (GlcNAc...) asparagine; by host). Residues 524–539 are fusion peptide; it reads HNAAGIAWIPYFGPGA. Residues 554-595 are a coiled coil; that stretch reads LVCGLRQLANETTQALQLFLRATTELRTYTILNRKAIDFLLR. N-linked (GlcNAc...) asparagine; by host glycosylation occurs at Asn563. Residues 615 to 634 are a coiled coil; the sequence is WTKNITDKINQIIHDFIDNP. Asn618 carries an N-linked (GlcNAc...) asparagine; by host glycan. A helical transmembrane segment spans residues 651–671; sequence WIPAGIGITGIIIAIIALLCV. 2 S-palmitoyl cysteine; by host lipidation sites follow: Cys670 and Cys672. The Cytoplasmic segment spans residues 672–676; it reads CKLLC.

Belongs to the filoviruses glycoprotein family. Homotrimer; each monomer consists of a GP1 and a GP2 subunit linked by disulfide bonds. The resulting peplomers (GP1,2) protrude from the virus surface as spikes. Interacts with host integrin alpha-V/ITGAV. Interacts with host CLEC10A. Binds also to host CD209 and CLEC4M/DC-SIGN(R). Interacts with host FOLR1. Interacts with BST2; this interaction inhibits the antiviral effect of BST2 and this allows viral release from infected cells. Interacts with host FCN1; this interaction enhances viral entry. Interacts with host TLR4; this interaction induces cell death in T-lymphocytes or proinflammatory cytokines and SOCS1 production in monocytes. In terms of assembly, interacts with host entry receptor NPC1. As to quaternary structure, GP1 and GP2delta are part of GP1,2delta soluble complexes released by ectodomain shedding. The signal peptide region modulates GP's high mannose glycosylation, thereby determining the efficiency of the interactions with DC-SIGN(R). In terms of processing, N-glycosylated. Post-translationally, O-glycosylated in the mucin-like region. Palmitoylation of GP2 is not required for its function. In terms of processing, specific enzymatic cleavages in vivo yield mature proteins. The precursor is processed into GP1 and GP2 by host cell furin in the trans Golgi, and maybe by other host proteases, to yield the mature GP1 and GP2 proteins. The cleavage site corresponds to the furin optimal cleavage sequence [KR]-X-[KR]-R. This cleavage does not seem to be required for function. After the internalization of the virus into cell endosomes, GP1 C-terminus is removed by the endosomal proteases cathepsin B, cathepsin L, or both, leaving a 19-kDa N-terminal fragment which is further digested by cathepsin B. Proteolytic processing of GP1,2 by host ADAM17 can remove the transmembrane anchor of GP2 and leads to shedding of complexes consisting in GP1 and truncated GP2 (GP1,2delta).

It is found in the virion membrane. The protein resides in the host cell membrane. Its subcellular location is the secreted. Trimeric GP1,2 complexes form the virion surface spikes and mediate the viral entry processes, with GP1 acting as the receptor-binding subunit and GP2 as the membrane fusion subunit. At later times of infection, down-regulates the expression of various host cell surface molecules that are essential for immune surveillance and cell adhesion. Down-modulates several integrins including ITGA1, ITGA2, ITGA3, ITGA4, ITGA5, ITGA6, ITGAV and ITGB1. This decrease in cell adhesion molecules may lead to cell detachment, contributing to the disruption of blood vessel integrity and hemorrhages developed during infection (cytotoxicity). Interacts with host TLR4 and thereby stimulates the differentiation and activation of monocytes leading to bystander death of T-lymphocytes. Down-regulates as well the function of host natural killer cells. Counteracts the antiviral effect of host BST2/tetherin that restricts release of progeny virions from infected cells. However, cooperates with VP40 and host BST2 to activate canonical NF-kappa-B pathway in a manner dependent on neddylation. In terms of biological role, functions as a decoy for anti-GP1,2 antibodies thereby contributing to viral immune evasion. Interacts and activates host macrophages and dendritic cells inducing up-regulation of cytokine transcription. This effect is mediated throught activation of host TLR4. Functionally, responsible for binding to the receptor(s) on target cells. Interacts with CD209/DC-SIGN and CLEC4M/DC-SIGNR which act as cofactors for virus entry into dendritic cells (DCs) and endothelial cells. Binding to the macrophage specific lectin CLEC10A also seem to enhance virus infectivity. Interaction with FOLR1/folate receptor alpha may be a cofactor for virus entry in some cell types, although results are contradictory. Members of the Tyro3 receptor tyrosine kinase family also seem to be cell entry factors in filovirus infection. Once attached, the virions are internalized through clathrin-dependent endocytosis and/or macropinocytosis. After internalization of the virus into the endosomes of the host cell, proteolysis of GP1 by two cysteine proteases, CTSB/cathepsin B and CTSL/cathepsin L removes the glycan cap and allows GP1 binding to the host entry receptor NPC1. NPC1-binding, Ca(2+) and acidic pH induce a conformational change of GP2, which unmasks its fusion peptide and permit membranes fusion. Its function is as follows. Acts as a class I viral fusion protein. Under the current model, the protein has at least 3 conformational states: pre-fusion native state, pre-hairpin intermediate state, and post-fusion hairpin state. During viral and target cell membrane fusion, the coiled coil regions (heptad repeats) assume a trimer-of-hairpins structure, positioning the fusion peptide in close proximity to the C-terminal region of the ectodomain. The formation of this structure appears to drive apposition and subsequent fusion of viral and target cell membranes. Responsible for penetration of the virus into the cell cytoplasm by mediating the fusion of the membrane of the endocytosed virus particle with the endosomal membrane. Low pH in endosomes induces an irreversible conformational change in GP2, releasing the fusion hydrophobic peptide. This Epomops franqueti (Franquet's epauletted fruit bat) protein is Envelope glycoprotein (GP).